Reading from the N-terminus, the 575-residue chain is Transmembrane protein 108 (575 aa).

The chain crosses the membrane as a helical span at residues 9–29 (YCQLLSFLLILALTEALAFAI). Residues 31 to 169 (EPSPRESLQV…TTTRRPPRPP (139 aa)) form an interaction with SH3GL2 region. A disordered region spans residues 65 to 398 (MLTPNPDGPP…PSRVSESTIS (334 aa)). The segment covering 74–87 (PSQAAAPMATPTPR) has biased composition (low complexity). Positions 95-115 (HTISTIAATVTAPHSESSLST) are enriched in polar residues. Positions 146-160 (PPGATSRPTTAPPRT) are enriched in low complexity. The tract at residues 173–407 (RKGAGNSSRP…SGAKEETVAT (235 aa)) is interaction with DST (isoform 1). Over residues 244 to 271 (YSSSPQPQTVAATTVPSNTSWAPTTTSL) the composition is skewed to polar residues. A compositionally biased stretch (low complexity) spans 290–318 (TFTSQGGTPDATAASGAPVSPQAAPVPSQ). The segment covering 329 to 352 (PSHSDSWLTVTPGTSRPLSTSSGV) has biased composition (polar residues). Residues 353 to 366 (FTAATGPTPAAFDT) are compositionally biased toward low complexity. The segment covering 367–398 (SVSAPSQGIPQGASTTPQAPTHPSRVSESTIS) has biased composition (polar residues). The chain crosses the membrane as a helical span at residues 469–489 (IAWVILAISVPISSCSVLLTV). The segment at 490–575 (CCMKRKKKTA…FVGNDQVSEI (86 aa)) is interaction with CYFIP2.

As to quaternary structure, interacts with DST (isoform 1). Interacts with SH3GL2. Interacts (via N-terminus) with CYFIP1 and CYFIP2; the interactions associate TMEM108 with the WAVE1 complex. Post-translationally, glycosylated.

Its subcellular location is the membrane. It is found in the postsynaptic density. The protein resides in the endosome membrane. It localises to the cell projection. The protein localises to the axon. Its subcellular location is the dendrite. It is found in the early endosome. Functionally, transmembrane protein required for proper cognitive functions. Involved in the development of dentate gyrus (DG) neuron circuitry, is necessary for AMPA receptors surface expression and proper excitatory postsynaptic currents of DG granule neurons. Regulates the organization and stability of the microtubule network of sensory neurons to allow axonal transport. Through the interaction with DST, mediates the docking of the dynein/dynactin motor complex to vesicle cargos for retrograde axonal transport. In hippocampal neurons, required for BDNF-dependent dendrite outgrowth. Cooperates with SH3GL2 and recruits the WAVE1 complex to facilitate actin-dependent BDNF:NTRK2 early endocytic trafficking and mediate signaling from early endosomes. The protein is Transmembrane protein 108 of Homo sapiens (Human).